The sequence spans 863 residues: Potassium/sodium hyperpolarization-activated cyclic nucleotide-gated channel 2 (863 aa).

Positions 1–10 are enriched in gly residues; sequence MDARGGGGRP. The segment at 1 to 131 is disordered; it reads MDARGGGGRP…AGPAGEPRGS (131 aa). Over 1 to 188 the chain is Cytoplasmic; it reads MDARGGGGRP…PYSDFRFYWD (188 aa). Residues 17–47 show a composition bias toward pro residues; that stretch reads TPAPGPPPPPPPPAPPQPQPPPAPPPNPTTP. The span at 106–128 shows a compositional bias: low complexity; the sequence is GAASGPSAAEEAGSEEAGPAGEP. Residues S119 and S134 each carry the phosphoserine modification. An involved in subunit assembly region spans residues 131-182; it reads SQASFLQRQFGALLQPGVNKFSLRMFGSQKAVEREQERVKSAGAWIIHPYSD. Residues 189 to 209 traverse the membrane as a helical segment; it reads FTMLLFMVGNLIIIPVGITFF. At 210-213 the chain is on the extracellular side; that stretch reads KDET. A helical transmembrane segment spans residues 214-234; sequence TAPWIVFNVVSDTFFLMDLVL. Residues 235–261 are Cytoplasmic-facing; sequence NFRTGIVIEDNTEIILDPEKIKKKYLR. Residues 262–282 traverse the membrane as a helical segment; it reads TWFVVDFVSSIPVDYIFLIVE. The Extracellular segment spans residues 283-290; the sequence is KGIDSEVY. Residues 291–311 form a helical; Voltage-sensor membrane-spanning segment; that stretch reads KTARALRIVRFTKILSLLRLL. At 312–342 the chain is on the cytoplasmic side; it reads RLSRLIRYIHQWEEIFHMTYDLASAVMRICN. Residues 343–363 traverse the membrane as a helical segment; sequence LISMMLLLCHWDGCLQFLVPM. The Extracellular portion of the chain corresponds to 364-386; sequence LQDFPSDCWVSINNMVNHSWSEL. Residue N380 is glycosylated (N-linked (GlcNAc...) asparagine). The segment at residues 387–408 is an intramembrane region (pore-forming); it reads YSFALFKAMSHMLCIGYGRQAP. The Extracellular portion of the chain corresponds to 409–413; that stretch reads ESMTD. The chain crosses the membrane as a helical span at residues 414-434; the sequence is IWLTMLSMIVGATCYAMFIGH. Residues 435–863 lie on the Cytoplasmic side of the membrane; the sequence is ATALIQSLDS…SARSRLSSNL (429 aa). 6 residues coordinate 3',5'-cyclic AMP: G581, E582, C584, R591, T592, and R632. The residue at position 641 (S641) is a Phosphoserine; by PKG/PRKG2. Position 726 is a phosphoserine (S726). R728 is modified (omega-N-methylarginine). The tract at residues 730 to 863 is disordered; sequence VRRAPPGPLP…SARSRLSSNL (134 aa). Residues 734–755 are compositionally biased toward pro residues; that stretch reads PPGPLPPAASPGPPAASPPAAP. Phosphoserine is present on residues S743, S750, and S757. 3 stretches are compositionally biased toward low complexity: residues 756-765, 778-800, and 808-834; these read SSPRAPRTSP, PALPARRLSRASRPLSASQPSLP, and PAASARPASSSTPRLGPAPTARTAAPS. 3 positions are modified to phosphoserine: S840, S842, and S847.

Belongs to the potassium channel HCN family. In terms of assembly, homotetramer. The channel is composed of a homo- or heterotetrameric complex of pore-forming subunits. Heterotetramer with HCN1. Forms an obligate 4:4 complex with accessory subunit PEX5L; regulates HCN2 cell-surface expression and cyclic nucleotide dependence. Interacts with KCNE2. Post-translationally, S-palmitoylated. N-glycosylated; required for cell surface trafficking of HCN2. In terms of processing, phosphorylation at Ser-641 by PRKG2 shifts the voltage-dependence to more negative voltages, hence counteracting the stimulatory effect of cGMP on gating. Highly expressed in brain. Detected at low levels in heart, in ventricle, atrium and in sinoatrial node (SAN).

The protein resides in the cell membrane. It carries out the reaction Na(+)(in) = Na(+)(out). The catalysed reaction is K(+)(in) = K(+)(out). It catalyses the reaction NH4(+)(in) = NH4(+)(out). With respect to regulation, activated by cAMP, and at 10-100 times higher concentrations, also by cGMP. cAMP binding causes a conformation change that leads to the assembly of an active tetramer and channel opening. In the absence of cAMP, the C-terminal region is thought to exert a tonic inhibition on the pore when HCN2 is in a non-tetrameric form. Channel activity is modulated by intracellular chloride ions and pH; acidic pH shifts the activation to more negative voltages. Phosphatidylinositol-4,5- bisphosphate (PIP(2)) acts as a ligand that allosterically opens HCN2 by shifting voltage-dependent channel activation toward depolarized potentials. Inhibited by extracellular cesium ions. Its function is as follows. Hyperpolarization-activated ion channel exhibiting weak selectivity for potassium over sodium ions. Contributes to the native pacemaker currents in heart (If) and in neurons (Ih). Can also transport ammonium in the distal nephron. Involved in the initiation of neuropathic pain in sensory neurons. The polypeptide is Potassium/sodium hyperpolarization-activated cyclic nucleotide-gated channel 2 (Mus musculus (Mouse)).